The primary structure comprises 149 residues: 3-dehydroquinate dehydratase (149 aa).

Catalysis depends on Y23, which acts as the Proton acceptor. Residues N75, H81, and D88 each contribute to the substrate site. H101 acts as the Proton donor in catalysis. Substrate-binding positions include 102 to 103 (MS) and R112.

It belongs to the type-II 3-dehydroquinase family. In terms of assembly, homododecamer.

The catalysed reaction is 3-dehydroquinate = 3-dehydroshikimate + H2O. The protein operates within metabolic intermediate biosynthesis; chorismate biosynthesis; chorismate from D-erythrose 4-phosphate and phosphoenolpyruvate: step 3/7. Catalyzes a trans-dehydration via an enolate intermediate. The sequence is that of 3-dehydroquinate dehydratase from Pelobacter propionicus (strain DSM 2379 / NBRC 103807 / OttBd1).